The primary structure comprises 269 residues: Senescence-associated protein 13 (269 aa).

Residue 21–45 coordinates NADP(+); sequence LVTGGSKGIGEAVVEELAMLGAKVH. Ser154 provides a ligand contact to substrate. The active-site Proton acceptor is the Tyr167.

This sequence belongs to the short-chain dehydrogenases/reductases (SDR) family. SDR65C subfamily.

Unspecific reductase providing both diastereomeric alcohols from the prochiral ketones. Active on cyclic monoterpenes and small flexible lipophilic carbonyls. No activity with tropinone, nitrogen-containing tropinone analogs, tropine or pseudotropine as substrate. This Arabidopsis thaliana (Mouse-ear cress) protein is Senescence-associated protein 13.